The primary structure comprises 688 residues: Envelope glycoprotein gp70 (688 aa).

The segment covering 1 to 15 (MPKHQSGSPTDSSDL) has biased composition (polar residues). A disordered region spans residues 1 to 37 (MPKHQSGSPTDSSDLLLSGKKQRPHLALRRKRRREMR). Positions 1 to 98 (MPKHQSGSPT…SVLGPPPVTG (98 aa)) are cleaved as a signal peptide. Over residues 20–37 (KKQRPHLALRRKRRREMR) the composition is skewed to basic residues. Residues 99 to 624 (ESYWAYLPKP…ALNPLDWTQY (526 aa)) are Extracellular-facing. Residues Asn-127 and Asn-143 are each glycosylated (N-linked (GlcNAc...) asparagine; by host). Residues 426 to 474 (LLPVDIGDEPWFDDSAIQTFRYATDLIRAKRFVAAIILGISALIAIITS) are a coiled coil. A propeptide spanning residues 455–456 (KR) is cleaved from the precursor. Residues 457-477 (FVAAIILGISALIAIITSFAV) are fusion peptide. Residues 463–481 (LGISALIAIITSFAVATTA) form an immunosuppression region. Asn-498 carries an N-linked (GlcNAc...) asparagine; by host glycan. Residues 511–541 (LKLEARLNALEEVVLELGQDVANLKTRMSTR) are a coiled coil. Asn-557 is a glycosylation site (N-linked (GlcNAc...) asparagine; by host). The helical transmembrane segment at 625–645 (FIFIGVGALLLVIVLMIFPIV) threads the bilayer. The Cytoplasmic segment spans residues 646–688 (FQCLAKSLDQVQSDLNVLLLKKKKGGNAAPAAEMVELPRVSYT).

The mature envelope protein (Env) consists of a trimer of SU-TM heterodimers attached by noncovalent interactions or by a labile interchain disulfide bond. Post-translationally, specific enzymatic cleavages in vivo yield mature proteins. Envelope glycoproteins are synthesized as an inactive precursor that is N-glycosylated and processed likely by host cell furin or by a furin-like protease in the Golgi to yield the mature SU and TM proteins. The cleavage site between SU and TM requires the minimal sequence [KR]-X-[KR]-R.

It localises to the virion membrane. The protein resides in the host cell membrane. Its function is as follows. The surface protein (SU) attaches the virus to the host cell by binding to its receptor. This interaction triggers the refolding of the transmembrane protein (TM) and is thought to activate its fusogenic potential by unmasking its fusion peptide. Fusion occurs at the host cell plasma membrane. The transmembrane protein (TM) acts as a class I viral fusion protein. Under the current model, the protein has at least 3 conformational states: pre-fusion native state, pre-hairpin intermediate state, and post-fusion hairpin state. During viral and target cell membrane fusion, the coiled coil regions (heptad repeats) assume a trimer-of-hairpins structure, positioning the fusion peptide in close proximity to the C-terminal region of the ectodomain. The formation of this structure appears to drive apposition and subsequent fusion of viral and target cell membranes. Membranes fusion leads to delivery of the nucleocapsid into the cytoplasm. The polypeptide is Envelope glycoprotein gp70 (env) (Mouse mammary tumor virus (strain BR6) (MMTV)).